A 461-amino-acid polypeptide reads, in one-letter code: Cysteine--tRNA ligase (461 aa).

Zn(2+) is bound at residue cysteine 28. Positions 30–40 (VTIYDLCHIGH) match the 'HIGH' region motif. The Zn(2+) site is built by cysteine 209, histidine 234, and glutamate 238. A 'KMSKS' region motif is present at residues 266–270 (KMSKS). ATP is bound at residue lysine 269.

The protein belongs to the class-I aminoacyl-tRNA synthetase family. Monomer. It depends on Zn(2+) as a cofactor.

It is found in the cytoplasm. The enzyme catalyses tRNA(Cys) + L-cysteine + ATP = L-cysteinyl-tRNA(Cys) + AMP + diphosphate. This Hamiltonella defensa subsp. Acyrthosiphon pisum (strain 5AT) protein is Cysteine--tRNA ligase.